The following is a 579-amino-acid chain: Arginine--tRNA ligase (579 aa).

The 'HIGH' region motif lies at 136–146; sequence ANPTGPLHIGH.

It belongs to the class-I aminoacyl-tRNA synthetase family. In terms of assembly, monomer.

The protein resides in the cytoplasm. The enzyme catalyses tRNA(Arg) + L-arginine + ATP = L-arginyl-tRNA(Arg) + AMP + diphosphate. The polypeptide is Arginine--tRNA ligase (Anaplasma marginale (strain St. Maries)).